A 623-amino-acid chain; its full sequence is Cell pattern formation-associated protein stuA (623 aa).

Positions 13-31 (QHMQSAGQPQQPQTVTSGP) are enriched in polar residues. The tract at residues 13–111 (QHMQSAGQPQ…DTTGQHPPPG (99 aa)) is disordered. Positions 115–221 (RVTATLWEDE…HNIGALLYHP (107 aa)) constitute an HTH APSES-type domain. Positions 149–170 (GTKLLNVAGMTRGRRDGILKSE) form a DNA-binding region, H-T-H motif. Disordered stretches follow at residues 232–270 (AAAE…PQSS) and 332–623 (ARSM…PRQR). Residues 335 to 374 (MPTTPATTPPGSMQPYGSAQSFDGSRQQMYNAPSQQSPYP) are compositionally biased toward polar residues. Positions 396 to 408 (GPPSSRPSGSAPS) are enriched in low complexity. The span at 423-446 (EHGHQSHAGEEDGEHEQHDAEYTH) shows a compositional bias: basic and acidic residues. Residues 542-553 (APPADMANPMPN) are compositionally biased toward low complexity. Residues 569–594 (KRGREGDDDLSRPVGDVPGMDMKRRK) are nuclear localization domain. Residues 570–579 (RGREGDDDLS) show a composition bias toward basic and acidic residues.

It belongs to the EFG1/PHD1/stuA family.

The protein resides in the nucleus. Its function is as follows. Transcription factor that regulates asexual reproduction. Binds the StuA-response elements (StRE) with the consensus sequence 5'-(A/T)CGCG(T/A)N(A/C)-3' at the promoters of target genes. Controls conidiation by positively regulating the expression of brlA and abaA. Positively regulates the cephalosporin biosynthesis gene cluster. Also involved hyphal fragmentation and cell wall integrity. The polypeptide is Cell pattern formation-associated protein stuA (Hapsidospora chrysogenum (strain ATCC 11550 / CBS 779.69 / DSM 880 / IAM 14645 / JCM 23072 / IMI 49137) (Acremonium chrysogenum)).